A 254-amino-acid chain; its full sequence is Small ribosomal subunit protein uS2 (254 aa).

This sequence belongs to the universal ribosomal protein uS2 family.

The sequence is that of Small ribosomal subunit protein uS2 from Legionella pneumophila (strain Corby).